The primary structure comprises 116 residues: Non-specific lipid-transfer protein 8 (116 aa).

The signal sequence occupies residues 1–24 (MNVLKCLAIISVLGIFFIPRYSES). 4 cysteine pairs are disulfide-bonded: C28–C76, C38–C53, C54–C98, and C74–C112.

The protein belongs to the plant LTP family.

Functionally, plant non-specific lipid-transfer proteins transfer phospholipids as well as galactolipids across membranes. May play a role in wax or cutin deposition in the cell walls of expanding epidermal cells and certain secretory tissues. This chain is Non-specific lipid-transfer protein 8 (LTP8), found in Arabidopsis thaliana (Mouse-ear cress).